Reading from the N-terminus, the 345-residue chain is UDP-N-acetylenolpyruvoylglucosamine reductase (345 aa).

Residues 25 to 193 form the FAD-binding PCMH-type domain; that stretch reads LPAHCTDFVS…VGVTFLLPKA (169 aa). The active site involves Arg-169. Ser-237 serves as the catalytic Proton donor. Residue Glu-333 is part of the active site.

The protein belongs to the MurB family. FAD is required as a cofactor.

The protein localises to the cytoplasm. The enzyme catalyses UDP-N-acetyl-alpha-D-muramate + NADP(+) = UDP-N-acetyl-3-O-(1-carboxyvinyl)-alpha-D-glucosamine + NADPH + H(+). It functions in the pathway cell wall biogenesis; peptidoglycan biosynthesis. Its function is as follows. Cell wall formation. The chain is UDP-N-acetylenolpyruvoylglucosamine reductase from Pseudoalteromonas atlantica (strain T6c / ATCC BAA-1087).